Consider the following 526-residue polypeptide: Bifunctional purine biosynthesis protein PurH (526 aa).

One can recognise an MGS-like domain in the interval Met1–Ile145.

Belongs to the PurH family.

The catalysed reaction is (6R)-10-formyltetrahydrofolate + 5-amino-1-(5-phospho-beta-D-ribosyl)imidazole-4-carboxamide = 5-formamido-1-(5-phospho-D-ribosyl)imidazole-4-carboxamide + (6S)-5,6,7,8-tetrahydrofolate. The enzyme catalyses IMP + H2O = 5-formamido-1-(5-phospho-D-ribosyl)imidazole-4-carboxamide. It participates in purine metabolism; IMP biosynthesis via de novo pathway; 5-formamido-1-(5-phospho-D-ribosyl)imidazole-4-carboxamide from 5-amino-1-(5-phospho-D-ribosyl)imidazole-4-carboxamide (10-formyl THF route): step 1/1. Its pathway is purine metabolism; IMP biosynthesis via de novo pathway; IMP from 5-formamido-1-(5-phospho-D-ribosyl)imidazole-4-carboxamide: step 1/1. The polypeptide is Bifunctional purine biosynthesis protein PurH (Polynucleobacter necessarius subsp. necessarius (strain STIR1)).